The chain runs to 381 residues: MTHASNTHPVTELTKELIARPSVTPLDEGCQTLMAERLAAIGFNIEPMVFEDTTNMWARRGNEGPVFCFAGHTDVVPAGDLSRWHTPPFEPTIIDGYLYGRGAADMKGSLAAMIVATERFVAKHPNHPGSIAFLITSDEEGPFINGTTRVIDTLEARNEKITWTLVGEPSSTLKLGDVVKNGRRGSLTANLTVKGIQGHVAYPHLADNPIHKAAPFLAELSQTHWDNGNEFFPPTSMQIANINGGTGASNVIPGTLEVMFNFRYSTEVTAEILIERVEALLTAHELDYDISWTFNGLPFLTGEGPLLDATRHAIRQITGYDTDPQTTGGTSDGRFIAPTGAKVLELGPVNATIHKVNECVKIDDLEQLALCYEVILEQLLC.

H72 lines the Zn(2+) pocket. Residue D74 is part of the active site. D105 contacts Zn(2+). E139 (proton acceptor) is an active-site residue. E140, E168, and H354 together coordinate Zn(2+).

It belongs to the peptidase M20A family. DapE subfamily. In terms of assembly, homodimer. Zn(2+) is required as a cofactor. Requires Co(2+) as cofactor.

It catalyses the reaction N-succinyl-(2S,6S)-2,6-diaminopimelate + H2O = (2S,6S)-2,6-diaminopimelate + succinate. The protein operates within amino-acid biosynthesis; L-lysine biosynthesis via DAP pathway; LL-2,6-diaminopimelate from (S)-tetrahydrodipicolinate (succinylase route): step 3/3. Its function is as follows. Catalyzes the hydrolysis of N-succinyl-L,L-diaminopimelic acid (SDAP), forming succinate and LL-2,6-diaminopimelate (DAP), an intermediate involved in the bacterial biosynthesis of lysine and meso-diaminopimelic acid, an essential component of bacterial cell walls. The protein is Succinyl-diaminopimelate desuccinylase of Shewanella sp. (strain ANA-3).